Here is a 188-residue protein sequence, read N- to C-terminus: Peptidyl-tRNA hydrolase (188 aa).

Residue Phe15 coordinates tRNA. His20 serves as the catalytic Proton acceptor. TRNA-binding residues include Tyr64, Asn66, and Asn112.

This sequence belongs to the PTH family. As to quaternary structure, monomer.

Its subcellular location is the cytoplasm. The catalysed reaction is an N-acyl-L-alpha-aminoacyl-tRNA + H2O = an N-acyl-L-amino acid + a tRNA + H(+). Hydrolyzes ribosome-free peptidyl-tRNAs (with 1 or more amino acids incorporated), which drop off the ribosome during protein synthesis, or as a result of ribosome stalling. Functionally, catalyzes the release of premature peptidyl moieties from peptidyl-tRNA molecules trapped in stalled 50S ribosomal subunits, and thus maintains levels of free tRNAs and 50S ribosomes. This Borreliella burgdorferi (strain ATCC 35210 / DSM 4680 / CIP 102532 / B31) (Borrelia burgdorferi) protein is Peptidyl-tRNA hydrolase.